Here is a 118-residue protein sequence, read N- to C-terminus: NADH-quinone oxidoreductase subunit A 2 (118 aa).

The next 3 membrane-spanning stretches (helical) occupy residues 5-25, 60-80, and 87-107; these read YLPI…SLVF, FYII…LYPW, and LGMF…VGYI.

It belongs to the complex I subunit 3 family. As to quaternary structure, NDH-1 is composed of 14 different subunits. Subunits NuoA, H, J, K, L, M, N constitute the membrane sector of the complex.

The protein resides in the cell inner membrane. It catalyses the reaction a quinone + NADH + 5 H(+)(in) = a quinol + NAD(+) + 4 H(+)(out). Functionally, NDH-1 shuttles electrons from NADH, via FMN and iron-sulfur (Fe-S) centers, to quinones in the respiratory chain. The immediate electron acceptor for the enzyme in this species is believed to be ubiquinone. Couples the redox reaction to proton translocation (for every two electrons transferred, four hydrogen ions are translocated across the cytoplasmic membrane), and thus conserves the redox energy in a proton gradient. The protein is NADH-quinone oxidoreductase subunit A 2 of Geobacter metallireducens (strain ATCC 53774 / DSM 7210 / GS-15).